We begin with the raw amino-acid sequence, 35 residues long: Photosystem II reaction center protein Psb30 (35 aa).

The chain crosses the membrane as a helical span at residues 7 to 27; the sequence is LIANFGALALITLAGPAVIFI.

The protein belongs to the Psb30/Ycf12 family. PSII is composed of 1 copy each of membrane proteins PsbA, PsbB, PsbC, PsbD, PsbE, PsbF, PsbH, PsbI, PsbJ, PsbK, PsbL, PsbM, PsbT, PsbX, PsbY, PsbZ, Psb30/Ycf12, peripheral proteins PsbO, CyanoQ (PsbQ), PsbU, PsbV and a large number of cofactors. It forms dimeric complexes.

The protein localises to the cellular thylakoid membrane. In terms of biological role, a core subunit of photosystem II (PSII), probably helps stabilize the reaction center. This Synechococcus sp. (strain CC9311) protein is Photosystem II reaction center protein Psb30.